Reading from the N-terminus, the 208-residue chain is Putative chemokine-related protein FP248 (208 aa).

Residues 1-23 form the signal peptide; the sequence is MGTGGSLLCGCSLVLSCLCPSAS. Asn-29 carries N-linked (GlcNAc...) asparagine glycosylation.

Its subcellular location is the secreted. The protein is Putative chemokine-related protein FP248 of Homo sapiens (Human).